Consider the following 129-residue polypeptide: ATP synthase epsilon chain (129 aa).

Belongs to the ATPase epsilon chain family. F-type ATPases have 2 components, CF(1) - the catalytic core - and CF(0) - the membrane proton channel. CF(1) has five subunits: alpha(3), beta(3), gamma(1), delta(1), epsilon(1). CF(0) has three main subunits: a, b and c.

The protein localises to the cell inner membrane. Produces ATP from ADP in the presence of a proton gradient across the membrane. The polypeptide is ATP synthase epsilon chain (Campylobacter jejuni subsp. jejuni serotype O:2 (strain ATCC 700819 / NCTC 11168)).